Consider the following 979-residue polypeptide: METGSPGKRPVLPKRARLLVTAGMGMLALLLFGPRLVDIYVDWLWFGEVGFRSVWITVLLTRLAIVAAVALVVAGIVLAALLLAYRSRPFFVPDEPQRDPVAPLRSAVMRRPRLFGWGIAVTLGVVCGLIASFDWVKVQLFVHGGTFGIVDPEFGYDIGFFVFDLPFYRSVLNWLFVAVVLAFLASLLTHYLFGGLRLTTGRGMLTQAARVQLAVFAGAVVLLKAVAYWLDRYELLSSGRKEPTFTGAGYTDIHAELPAKLVLVAIAVLCAVSFFTAIFLRDLRIPAMAAALLVLSAILVGGLWPLLMEQFSVRPNAADVERPYIQRNIEATREAYRIGGDWVQYRSYPGIGTKQPRDVPVDVTTIAKVRLLDPHILSRTFTQQQQLKNFFSFAEILDIDRYRIDGELQDYIVGVRELSPKSLTGNQTDWINKHIVYTHGNGFVAAPANRVNAAARDAENISDSNSGYPIYAVSDIASLGSGRQVIPVEQPRVYYGEVIAQADPDYAIVGGAPGSAPREYDTDTSKYTYTGAGGVSIGNWFNRTVFATKFAQHKFLFSREIGSESKVLIHRDPKERVQRVAPWLTTDDNPYPVVVNGRIVWIVDAYTTLDTYPYAQRSSLEGPVTSPTGIVRQGKQVSYVRNSVKATVDAYDGTVTLFQFDRDDPVLRTWMRAFPGTVKSEDQIPDELRAHFRYPEDLFEVQRSLLAKYHVDEPREFFTTNAFWSVPSDPTNDANATQPPFYVLVGDQQSAQPSFRLASAMVGYNREFLSAYISAHSDPANYGKLTVLELPTDTLTQGPQQIQNSMISDTRVASERTLLERSNRIHYGNLLSLPIADGGVLYVEPLYTERISTSPSSSTFPQLSRVLVSVREPRTEGGVRVGYAPTLAESLDQVFGPGTGRVATAPGGDAASAPPPGAGGPAPPQAVPPPRTTQPPAAPPRGPDVPPATVAELRETLADLRAVLDRLEKAIDAAETPGG.

7 helical membrane-spanning segments follow: residues 19–41 (LVTA…DIYV), 63–85 (LAIV…LLAY), 114–136 (LFGW…FDWV), 174–196 (WLFV…FGGL), 208–230 (AARV…AYWL), 261–280 (LVLV…AIFL), and 285–307 (IPAM…WPLL). Positions 898–948 (GTGRVATAPGGDAASAPPPGAGGPAPPQAVPPPRTTQPPAAPPRGPDVPPA) are disordered. A compositionally biased stretch (low complexity) spans 902–912 (VATAPGGDAAS). Residues 913 to 946 (APPPGAGGPAPPQAVPPPRTTQPPAAPPRGPDVP) show a composition bias toward pro residues.

The protein belongs to the UPF0182 family.

The protein resides in the cell membrane. This chain is UPF0182 protein Mb0065, found in Mycobacterium bovis (strain ATCC BAA-935 / AF2122/97).